The chain runs to 279 residues: High choriolytic enzyme 2 (279 aa).

The N-terminal stretch at 1–20 (MNLASSACLLLLFLLGIAQA) is a signal peptide. A propeptide spans 21 to 79 (LPVQNEEGHEEGNKEGHGEEGVEEGDEDDFVDFTTRILTSNNNTDQLLLEGDLVAPTNR) (activation peptide). Over residues 26 to 40 (EEGHEEGNKEGHGEE) the composition is skewed to basic and acidic residues. The interval 26–46 (EEGHEEGNKEGHGEEGVEEGD) is disordered. Asn62 carries N-linked (GlcNAc...) asparagine glycosylation. The Peptidase M12A domain occupies 80–279 (NAMKCWYNSC…TRSNVLYNCR (200 aa)). Cystine bridges form between Cys84–Cys89, Cys129–Cys278, and Cys150–Cys170. Zn(2+) is bound at residue His178. Residue Glu179 is part of the active site. Residues His182 and His188 each coordinate Zn(2+).

It depends on Zn(2+) as a cofactor.

Its subcellular location is the zymogen granule. The catalysed reaction is Hydrolysis of the inner layer of fish egg envelope. Also hydrolysis of casein and small molecule substrates such as succinyl-Leu-Leu-Val-Tyr-|-7-(4-methyl)coumarylamide.. Its function is as follows. Participates in the breakdown of the egg envelope, which is derived from the egg extracellular matrix, at the time of hatching. Thus allowing the newly hatched fish to swim free. HCE binds tightly to the egg envelope while it exerts the choriolytic swelling action. The protein is High choriolytic enzyme 2 (hceb) of Oryzias latipes (Japanese rice fish).